The following is a 217-amino-acid chain: Pyridoxine/pyridoxamine 5'-phosphate oxidase (217 aa).

Substrate-binding positions include 13–16 (RREY) and lysine 71. FMN contacts are provided by residues 66-71 (RIVLLK), 81-82 (YT), arginine 87, lysine 88, and glutamine 110. Residues tyrosine 128, arginine 132, and serine 136 each coordinate substrate. Residues 145 to 146 (QS) and tryptophan 190 contribute to the FMN site. A substrate-binding site is contributed by 196-198 (RLH). Arginine 200 provides a ligand contact to FMN.

The protein belongs to the pyridoxamine 5'-phosphate oxidase family. In terms of assembly, homodimer. The cofactor is FMN.

It carries out the reaction pyridoxamine 5'-phosphate + O2 + H2O = pyridoxal 5'-phosphate + H2O2 + NH4(+). It catalyses the reaction pyridoxine 5'-phosphate + O2 = pyridoxal 5'-phosphate + H2O2. It functions in the pathway cofactor metabolism; pyridoxal 5'-phosphate salvage; pyridoxal 5'-phosphate from pyridoxamine 5'-phosphate: step 1/1. It participates in cofactor metabolism; pyridoxal 5'-phosphate salvage; pyridoxal 5'-phosphate from pyridoxine 5'-phosphate: step 1/1. Its function is as follows. Catalyzes the oxidation of either pyridoxine 5'-phosphate (PNP) or pyridoxamine 5'-phosphate (PMP) into pyridoxal 5'-phosphate (PLP). The sequence is that of Pyridoxine/pyridoxamine 5'-phosphate oxidase from Photorhabdus laumondii subsp. laumondii (strain DSM 15139 / CIP 105565 / TT01) (Photorhabdus luminescens subsp. laumondii).